The primary structure comprises 225 residues: Chlorosome protein J (225 aa).

In terms of domain architecture, 2Fe-2S ferredoxin-type spans 1 to 95; that stretch reads MIIYINDKPC…TIRVLTRAEK (95 aa). Residues cysteine 33, cysteine 39, cysteine 42, and cysteine 77 each contribute to the [2Fe-2S] cluster site.

It depends on [2Fe-2S] cluster as a cofactor.

It is found in the chlorosome. Functionally, could play a direct role in the oxidation or reduction of the quenching species formed in the chlorosome. The sequence is that of Chlorosome protein J (csmJ) from Chlorobaculum tepidum (strain ATCC 49652 / DSM 12025 / NBRC 103806 / TLS) (Chlorobium tepidum).